We begin with the raw amino-acid sequence, 883 residues long: MNEQYSALRSNVSMLGKVLGETIKDALGEHILDRVETIRKLSKSSRAGNEANRRELLTTLQNLSNDELLPVARAFSQFLNLANTAEQYHSISPKGEAASNPEVIARTLRKLKNQPDLNDATIKKAVESLSLELVLTAHPTEITRRTLIHKMGEINNCLKQLDNTDIADYERHQVMRRLRQLIAQSWHTDEIRKQRPSPVDEAKWGFAVVENSLWQGVPNYLRELNEQLEENLGYKLPVDFVPVRFTSWMGGDRDGNPNVTADITRHVLLLSRWKATDLFLKDIHVLVSELSMVDATPELLALVGEEGASEPYRYLMKKLRARLMATQSWLEARLKGEELPKPAGLLTQNEQLWEPLYACYQSLQACGMGIIANGELLDTLRRVKCFGVPLVRIDIRQESTRHTEALGEITRYLGIGDYESWSEADKQAFLIRELNSKRPLLPRNWEPSNDTREVLETCKVIAEAPKGSIAAYVISMAKTPSDVLAVHLLLKEAGIGFAMPVAPLFETLDDLNNADDVMTQLLNIDWYRGLIQGKQMVMIGYSDSAKDAGVMAASWAQYQAQDALIKTCEKAGIELTLFHGRGGSIGRGGAPAHAALLSQPPGSLEGGLRVTEQGEMIRFKYGLPEVTVSSLSLYTSAILEANLLPPPEPKDSWRHIMDELSVISCETYRGYVRENKDFVPYFRSATPEQELGKLPLGSRPAKRRPTGGVESLRAIPWIFAWTQNRLMLPAWLGAGTALQKVVEDGKQSELEAMCRDWPFFSTRLGMLEMVFSKADLWLADYYDQRLVAKTLWPLGKELRDLLEEDIKVVLAIANDSHLMADLPWIAESIQLRNVYTDPLNVLQAELLYRSRLTEEQGKSPDPRVEQALMVTIAGVAAGMRNTG.

Residues H138 and K546 contribute to the active site.

The protein belongs to the PEPCase type 1 family. It depends on Mg(2+) as a cofactor.

The enzyme catalyses oxaloacetate + phosphate = phosphoenolpyruvate + hydrogencarbonate. Its function is as follows. Forms oxaloacetate, a four-carbon dicarboxylic acid source for the tricarboxylic acid cycle. This chain is Phosphoenolpyruvate carboxylase, found in Salmonella paratyphi A (strain ATCC 9150 / SARB42).